The chain runs to 565 residues: NAD-dependent malic enzyme (565 aa).

The active-site Proton donor is Tyr104. Arg157 is an NAD(+) binding site. Catalysis depends on Lys175, which acts as the Proton acceptor. Residues Glu246, Asp247, and Asp270 each coordinate a divalent metal cation. Residues Asp270 and Asn418 each contribute to the NAD(+) site.

This sequence belongs to the malic enzymes family. In terms of assembly, homotetramer. Mg(2+) is required as a cofactor. Mn(2+) serves as cofactor.

It catalyses the reaction (S)-malate + NAD(+) = pyruvate + CO2 + NADH. The catalysed reaction is oxaloacetate + H(+) = pyruvate + CO2. The sequence is that of NAD-dependent malic enzyme from Klebsiella pneumoniae (strain 342).